A 139-amino-acid polypeptide reads, in one-letter code: Short neuropeptide F (139 aa).

Residues 1–23 (MGRARRTVRAPAQHDALGGHALA) constitute a propeptide that is removed on maturation. The disordered stretch occupies residues 1 to 48 (MGRARRTVRAPAQHDALGGHALARKSVRSPSRRLRFGRRSDPDMPPQA). A compositionally biased stretch (basic residues) spans 22 to 37 (LARKSVRSPSRRLRFG). Phe-36 is subject to Phenylalanine amide. A propeptide spanning residues 40–62 (SDPDMPPQAPLDEMNELLSLREV) is cleaved from the precursor. Phenylalanine amide is present on Phe-70. The propeptide occupies 74 to 96 (SEERAVPHIFPQEFLTQEQDRAV). Position 105 is a phenylalanine amide (Phe-105). Residues 109-139 (SDNNMFLLPYESALPQEVKANGSVEDDRQQE) constitute a propeptide that is removed on maturation.

The protein belongs to the NPY family. As to expression, sNPF peptide 1: Expressed in corpora cardiaca (CC), corpora allata (CA), antennal lobe (AL) and gnathal ganglion (GNG) (at protein level). Expression in AL detected in all animals, in GNG in most animals, expression in CC and CA in some animals (at protein level). sNPF peptide 2: Expressed in corpora cardiaca (CC), corpora allata (CA), antennal lobe (AL) and gnathal ganglion (GNG) (at protein level). Expression in AL detected in all animals, in GNG, CC and CA in most animals (at protein level). sNPF peptide 3: Expressed in corpora cardiaca (CC), corpora allata (CA), antennal lobe (AL) and gnathal ganglion (GNG) (at protein level). Expression detected in all animals (at protein level).

It localises to the secreted. Its function is as follows. Plays a role in controlling food intake and regulating body size. This is Short neuropeptide F from Agrotis ipsilon (Black cutworm moth).